Here is a 216-residue protein sequence, read N- to C-terminus: Orotate phosphoribosyltransferase (216 aa).

Position 30 (K30) interacts with 5-phospho-alpha-D-ribose 1-diphosphate. 38 to 39 (FF) contacts orotate. Residues 75-76 (YK), R102, K103, K106, H108, and 128-136 (DDVITAGTA) each bind 5-phospho-alpha-D-ribose 1-diphosphate. Orotate is bound by residues T132 and R160.

Belongs to the purine/pyrimidine phosphoribosyltransferase family. PyrE subfamily. Homodimer. It depends on Mg(2+) as a cofactor.

The enzyme catalyses orotidine 5'-phosphate + diphosphate = orotate + 5-phospho-alpha-D-ribose 1-diphosphate. It functions in the pathway pyrimidine metabolism; UMP biosynthesis via de novo pathway; UMP from orotate: step 1/2. Functionally, catalyzes the transfer of a ribosyl phosphate group from 5-phosphoribose 1-diphosphate to orotate, leading to the formation of orotidine monophosphate (OMP). The polypeptide is Orotate phosphoribosyltransferase (Acinetobacter baumannii (strain ATCC 17978 / DSM 105126 / CIP 53.77 / LMG 1025 / NCDC KC755 / 5377)).